The chain runs to 577 residues: MPKTISVRVTTMDAELEFAIQPNTTGKQLFDQVVKTIGLREVWFFGLQYQDTKAFSTWLKLNKKVTAQDVRKESPLLFKFRAKFYPEDVSEELIQDITQRLFFLQVKEGILNDDIYCPPETAVLLASYAVQSKYGDFNKEVHKSGYLAGDKLLPQRVLEQHKLNKDQWEERIQVWHEEHRGMLREDAVLEYLKIAQDLEMYGVNYFSIKNKKGSELWLGVDALGLNIYEQNDRLTPKIGFPWSEIRNISFNDKKFVIKPIDKKAPDFVFYAPRLRINKRILALCMGNHELYMRRRKPDTIEVQQMKAQAREEKHQKQMERALLENEKKKRELAEKEKEKIEREKEELMEKLKQIEEQTKKAQQELEEQTRRALELEQERKRAQSEAEKLAKERQEAEEAKEALLQASRDQKKTQEQLASEMAELTARISQLEMARKKKESEAVEWQQKAQMVQEDLEKTRAELKTAMSTPHVAEPAENEHDEQDENGAEASAELRADAMAKDRSEEERTTEAEKNERVQKHLKALTSELANARDESKKTANDMIHAENMRLGRDKYKTLRQIRQGNTKQRIDEFESM.

The FERM domain occupies 2–295 (PKTISVRVTT…GNHELYMRRR (294 aa)). A Phosphoserine modification is found at Ser74. Lys79 is modified (N6-acetyllysine). An N6-succinyllysine modification is found at Lys83. The [IL]-x-C-x-x-[DE] motif motif lies at 115–120 (IYCPPE). Phosphotyrosine is present on Tyr116. Cys117 bears the S-nitrosocysteine mark. An N6-acetyllysine mark is found at Lys139 and Lys165. Disordered regions lie at residues 322–342 (LLENEKKKRELAEKEKEKIER), 358–419 (TKKA…QLAS), and 468–518 (STPH…NERV). Positions 358 to 401 (TKKAQQELEEQTRRALELEQERKRAQSEAEKLAKERQEAEEAKE) are enriched in basic and acidic residues. A Phosphoserine modification is found at Ser407. Residues 492–518 (AELRADAMAKDRSEEERTTEAEKNERV) are compositionally biased toward basic and acidic residues. Ser527 carries the post-translational modification Phosphoserine. Thr558 carries the post-translational modification Phosphothreonine; by ROCK2 and STK10.

In terms of assembly, in resting T-cells, part of a PAG1-NHERF1-MSN complex which is disrupted upon TCR activation. Interacts with NHERF1. Interacts with PPP1R16B. Interacts with SELPLG and SYK; these interactions mediate the activation of SYK by SELPLG. Interacts with PDPN (via cytoplasmic domain); this interaction activates RHOA and promotes epithelial-mesenchymal transition. Interacts with SPN/CD43 cytoplasmic tail. Interacts with CD44. Interacts with ICAM2. Interacts with ICAM3 (via C-terminus). Interacts with PDZD8. Interacts with F-actin. Interacts with CD46. Interacts with PTPN6. Phosphorylation on Thr-558 by STK10 negatively regulates lymphocyte migration and polarization. Phosphorylation on Thr-558 is crucial for the formation of microvilli-like structures. Phosphorylation by ROCK2 suppresses the head-to-tail association of the N-terminal and C-terminal halves resulting in an opened conformation which is capable of actin and membrane-binding. In terms of processing, S-nitrosylation of Cys-117 is induced by interferon-gamma and oxidatively-modified low-densitity lipoprotein (LDL(ox)) implicating the iNOS-S100A8/9 transnitrosylase complex.

The protein localises to the cell membrane. It is found in the cytoplasm. It localises to the cytoskeleton. The protein resides in the apical cell membrane. Its subcellular location is the cell projection. The protein localises to the microvillus membrane. It is found in the microvillus. Functionally, ezrin-radixin-moesin (ERM) family protein that connects the actin cytoskeleton to the plasma membrane and thereby regulates the structure and function of specific domains of the cell cortex. Tethers actin filaments by oscillating between a resting and an activated state providing transient interactions between moesin and the actin cytoskeleton. Once phosphorylated on its C-terminal threonine, moesin is activated leading to interaction with F-actin and cytoskeletal rearrangement. These rearrangements regulate many cellular processes, including cell shape determination, membrane transport, and signal transduction. The role of moesin is particularly important in immunity acting on both T and B-cells homeostasis and self-tolerance, regulating lymphocyte egress from lymphoid organs. Modulates phagolysosomal biogenesis in macrophages. Also participates in immunologic synapse formation. This is Moesin from Mus musculus (Mouse).